Consider the following 150-residue polypeptide: Protein adenylyltransferase MntA (150 aa).

The GSX(10)DXD motif motif lies at G32–D46. Catalysis depends on residues D44 and D46. D44, D46, and D86 together coordinate Mg(2+).

It belongs to the MntA antitoxin family. As to quaternary structure, forms a complex with HepT, probably MntA(1):HepT(2) in vivo; can only be purified when both 'Arg-102' and 'Tyr-109' (or 'His-107' and 'Tyr-109') of HepThave been mutated. The fully di-AMPylated HepT homodimer is not found in a complex with MntA. Mg(2+) serves as cofactor.

It catalyses the reaction L-tyrosyl-[protein] + ATP = O-(5'-adenylyl)-L-tyrosyl-[protein] + diphosphate. The catalysed reaction is O-(5'-adenylyl)-L-tyrosyl-[protein] + ATP = O-[5'-(adenylyl-(5'-&gt;3')-adenylyl)]-L-tyrosyl-[protein] + diphosphate. Antitoxin component of a type VII toxin-antitoxin (TA) system. Upon cloning in E.coli neutralizes the effect of cognate toxin HepT. Neutralization is mostly due to di-AMPylation of toxin by this enzyme. Successively di-AMPylates HepT on 'Tyr-109'. In vitro will use ATP, dATP, GTP, dGTP, TTP or UTP to generate a mono-modified protein, but requires a purine nucleotide for the second modification reaction (ATP, dATP or GTP). In Aphanizomenon flos-aquae (strain 2012/KM1/D3), this protein is Protein adenylyltransferase MntA.